The primary structure comprises 346 residues: MSKIFVDACFRKETPYTPVWMMRQAGRYLPEYMEVRAKAGNFLNLCHNPELAAEVTIQPLDIVGVDAAILFSDILVVPNEMGMKLDFLKGEGPVFDKPIKTEADLDALIGGEEAANKLTYVYETIKILKQRLPQDKALIGFTGAPWTLATYMIEGQGTKTYNLCKKMMYSNPEFLHKILRRVTDVVKFYMEKQIEAGVDVVQIFDSWAAAIEPSKYDEFSWKYMVEIAEYLKEKYPHIPVIMFPKGIAAFIERGLVYGNFDVFGVDWGTPMALAKEKLGEKYVLQGNMEPCRLYSKEATTMCVEGIQNIMGGNGHIFNLGHGILPDVPVENAIHFVKECQRVSKKA.

Residues 23-27 (RQAGR), D73, Y151, S206, and H321 each bind substrate.

Belongs to the uroporphyrinogen decarboxylase family. Homodimer.

Its subcellular location is the cytoplasm. It carries out the reaction uroporphyrinogen III + 4 H(+) = coproporphyrinogen III + 4 CO2. The protein operates within porphyrin-containing compound metabolism; protoporphyrin-IX biosynthesis; coproporphyrinogen-III from 5-aminolevulinate: step 4/4. Its function is as follows. Catalyzes the decarboxylation of four acetate groups of uroporphyrinogen-III to yield coproporphyrinogen-III. The sequence is that of Uroporphyrinogen decarboxylase from Aliarcobacter butzleri (strain RM4018) (Arcobacter butzleri).